The sequence spans 267 residues: 27 kDa primary mesenchyme-specific spicule protein (267 aa).

A signal peptide spans M1 to G16. The tract at residues E20–Q64 is 11 X 4 AA tandem repeats of G-[PQ]-G-[MQ]. Tandem repeats lie at residues G21–M24, G25–M28, G29–M32, G33–M36, G37–M40, G41–M44, G45–M48, G49–M52, G53–Q56, G57–Q60, and G61–Q64. The interval M44–G68 is disordered. A C-type lectin domain is found at I79 to S220. 2 disulfides stabilise this stretch: C100–C219 and C197–C211.

As to expression, expressed specifically in the micromere/primary mesenchyme cells (PMC) lineage. Produced uniformly and exclusively by PMCs through the early prism stage and this specificity is further restricted during skeletogenesis to a subpopulation of PMCs associated with the growing tips of the spicules.

Its subcellular location is the secreted. In terms of biological role, may play a role in the regulation or execution of skeletal growth. The polypeptide is 27 kDa primary mesenchyme-specific spicule protein (PM27) (Strongylocentrotus purpuratus (Purple sea urchin)).